The sequence spans 86 residues: YcgL domain-containing protein Smlt4554 (86 aa).

The YcgL domain occupies 1–85 (MHAYVYKSQL…SVASLMPRHY (85 aa)).

The sequence is that of YcgL domain-containing protein Smlt4554 from Stenotrophomonas maltophilia (strain K279a).